The following is a 230-amino-acid chain: 2-C-methyl-D-erythritol 4-phosphate cytidylyltransferase (230 aa).

Belongs to the IspD/TarI cytidylyltransferase family. IspD subfamily.

The catalysed reaction is 2-C-methyl-D-erythritol 4-phosphate + CTP + H(+) = 4-CDP-2-C-methyl-D-erythritol + diphosphate. Its pathway is isoprenoid biosynthesis; isopentenyl diphosphate biosynthesis via DXP pathway; isopentenyl diphosphate from 1-deoxy-D-xylulose 5-phosphate: step 2/6. Catalyzes the formation of 4-diphosphocytidyl-2-C-methyl-D-erythritol from CTP and 2-C-methyl-D-erythritol 4-phosphate (MEP). This chain is 2-C-methyl-D-erythritol 4-phosphate cytidylyltransferase, found in Nocardia farcinica (strain IFM 10152).